The primary structure comprises 203 residues: Inosine triphosphate pyrophosphatase (203 aa).

13 to 18 (TGNAKK) contacts ITP. Glutamate 43 lines the Mg(2+) pocket. Residues lysine 55, 71–72 (DT), lysine 88, 147–150 (FGWD), lysine 170, and 175–176 (HR) each bind ITP.

This sequence belongs to the HAM1 NTPase family. In terms of assembly, homodimer. Mg(2+) is required as a cofactor. Mn(2+) serves as cofactor.

The protein localises to the cytoplasm. It catalyses the reaction ITP + H2O = IMP + diphosphate + H(+). The catalysed reaction is dITP + H2O = dIMP + diphosphate + H(+). The enzyme catalyses XTP + H2O = XMP + diphosphate + H(+). It carries out the reaction N(6)-hydroxy-dATP + H2O = N(6)-hydroxy-dAMP + diphosphate + H(+). Functionally, pyrophosphatase that hydrolyzes the non-canonical purine nucleotides inosine triphosphate (ITP), deoxyinosine triphosphate (dITP) as well as 2'-deoxy-N-6-hydroxylaminopurine triphosphate (dHAPTP) and xanthosine 5'-triphosphate (XTP) to their respective monophosphate derivatives. The enzyme does not distinguish between the deoxy- and ribose forms. Probably excludes non-canonical purines from RNA and DNA precursor pools, thus preventing their incorporation into RNA and DNA and avoiding chromosomal lesions. The chain is Inosine triphosphate pyrophosphatase (itpa) from Danio rerio (Zebrafish).